Here is a 579-residue protein sequence, read N- to C-terminus: Proteasome-associated ATPase (579 aa).

The segment at M1–E21 is disordered. Positions E8–P86 form a coiled coil. G268–L273 serves as a coordination point for ATP. The interval Y578–L579 is docks into pockets in the proteasome alpha-ring.

The protein belongs to the AAA ATPase family. As to quaternary structure, homohexamer. Assembles into a hexameric ring structure that caps the 20S proteasome core. Strongly interacts with the prokaryotic ubiquitin-like protein Pup through a hydrophobic interface; the interacting region of ARC lies in its N-terminal coiled-coil domain. There is one Pup binding site per ARC hexamer ring. Upon ATP-binding, the C-terminus of ARC interacts with the alpha-rings of the proteasome core, possibly by binding to the intersubunit pockets.

Its pathway is protein degradation; proteasomal Pup-dependent pathway. Functionally, ATPase which is responsible for recognizing, binding, unfolding and translocation of pupylated proteins into the bacterial 20S proteasome core particle. May be essential for opening the gate of the 20S proteasome via an interaction with its C-terminus, thereby allowing substrate entry and access to the site of proteolysis. Thus, the C-termini of the proteasomal ATPase may function like a 'key in a lock' to induce gate opening and therefore regulate proteolysis. The polypeptide is Proteasome-associated ATPase (Acidimicrobium ferrooxidans (strain DSM 10331 / JCM 15462 / NBRC 103882 / ICP)).